A 409-amino-acid chain; its full sequence is Putative competence-damage inducible protein (409 aa).

Belongs to the CinA family.

This chain is Putative competence-damage inducible protein, found in Clostridium botulinum (strain Okra / Type B1).